The primary structure comprises 97 residues: Large ribosomal subunit protein eL21 (97 aa).

The tract at residues 1–23 (MTKMSKGPRSGSRRVMTKSVKNK) is disordered.

Belongs to the eukaryotic ribosomal protein eL21 family.

The sequence is that of Large ribosomal subunit protein eL21 from Picrophilus torridus (strain ATCC 700027 / DSM 9790 / JCM 10055 / NBRC 100828 / KAW 2/3).